Consider the following 648-residue polypeptide: S-M checkpoint control protein rad4 (648 aa).

2 BRCT domains span residues 2 to 92 and 96 to 185; these read GSSK…DDGL and KHFL…YFQL. The short motif at 242 to 249 is the Nuclear localization signal element; it reads KRGKKRDR. BRCT domains are found at residues 298–384 and 392–486; these read NEAK…EHAL and SLVP…SPWA. Serine 592 bears the Phosphoserine mark. Positions 643–648 match the Nuclear localization signal motif; that stretch reads RKLRRR.

As to quaternary structure, interacts with drc1/sld2. Interacts (via BRCT1,2 domains) with crb2; a single rad4 molecule interacts simultaneously with both 'Thr-187' phosphorylation sites in a crb2 dimer.

It is found in the nucleus. In terms of biological role, essential component for DNA replication and also the checkpoint control system which couples S and M phases. May directly or indirectly interact with chromatin proteins to form the complex required for the initiation and/or progression of DNA synthesis. Interacts simultaneously with both 'Thr-187' phosphorylation sites in a crb2 dimer for establishing the DNA checkpoint. In Schizosaccharomyces pombe (strain 972 / ATCC 24843) (Fission yeast), this protein is S-M checkpoint control protein rad4 (rad4).